We begin with the raw amino-acid sequence, 509 residues long: Pentatricopeptide repeat-containing protein At2g13420, mitochondrial (509 aa).

The transit peptide at 1-19 directs the protein to the mitochondrion; sequence MLLLKQISPPFHLHQLRRR. 8 PPR repeats span residues 172–202, 206–240, 241–285, 286–320, 321–355, 356–390, 391–425, and 426–460; these read RLVE…RKEE, DEKV…GIEP, NVVT…GIEP, DVTS…GISP, TIET…GISP, SSAT…LCKP, STQT…ETGP, and DLDS…GFLP.

Belongs to the PPR family. P subfamily.

It is found in the mitochondrion. This chain is Pentatricopeptide repeat-containing protein At2g13420, mitochondrial, found in Arabidopsis thaliana (Mouse-ear cress).